The following is a 234-amino-acid chain: Ribonuclease HII (234 aa).

The region spanning 16-207 (ALVAGVDEAG…VRRMLTPKAI (192 aa)) is the RNase H type-2 domain. Positions 22, 23, and 115 each coordinate a divalent metal cation.

Belongs to the RNase HII family. Mn(2+) serves as cofactor. It depends on Mg(2+) as a cofactor.

Its subcellular location is the cytoplasm. It carries out the reaction Endonucleolytic cleavage to 5'-phosphomonoester.. Functionally, endonuclease that specifically degrades the RNA of RNA-DNA hybrids. This Xylella fastidiosa (strain M23) protein is Ribonuclease HII.